Here is a 224-residue protein sequence, read N- to C-terminus: A-factor barrier protein 1 (224 aa).

An N-terminal signal peptide occupies residues 1–25 (MIFAPSFSLIKNILLVSFLISHSFA). N148, N181, and N191 each carry an N-linked (GlcNAc...) asparagine glycan. A lipid anchor (GPI-anchor amidated asparagine) is attached at N203. Residues 204-224 (GAHAKSLYFPMALFGIFAVAL) constitute a propeptide, removed in mature form.

This sequence belongs to the SRP1/TIP1 family. The GPI-anchor is attached to the protein in the endoplasmic reticulum and serves to target the protein to the cell surface. There, the glucosamine-inositol phospholipid moiety is cleaved off and the GPI-modified mannoprotein is covalently attached via its lipidless GPI glycan remnant to the 1,6-beta-glucan of the outer cell wall layer.

The protein localises to the secreted. Its subcellular location is the cell wall. The protein resides in the membrane. In terms of biological role, MATalpha-specific protein that interferes with a-factor, the pheromone secreted by MATa cells. Contributes to mating efficiency. Acts to bind and sequester a-factor rather than to degrade it, and promotes the efficient mating of MATalpha cells by keeping the a-factor concentration at the plasma membrane within the narrow range needed for accurate pheromone gradient detection. The sequence is that of A-factor barrier protein 1 from Saccharomyces cerevisiae (strain ATCC 204508 / S288c) (Baker's yeast).